Consider the following 329-residue polypeptide: Ribosomal RNA small subunit methyltransferase H (329 aa).

S-adenosyl-L-methionine is bound by residues 34-36, Asp-52, Phe-79, Asp-100, and Gln-107; that span reads GGY. Positions 285-329 are disordered; the sequence is GEDEVAHNPRARSAKLRAAERTSAPAHKDDQSSSWPRLSDVMRGG.

It belongs to the methyltransferase superfamily. RsmH family.

Its subcellular location is the cytoplasm. The enzyme catalyses cytidine(1402) in 16S rRNA + S-adenosyl-L-methionine = N(4)-methylcytidine(1402) in 16S rRNA + S-adenosyl-L-homocysteine + H(+). Its function is as follows. Specifically methylates the N4 position of cytidine in position 1402 (C1402) of 16S rRNA. The protein is Ribosomal RNA small subunit methyltransferase H of Bradyrhizobium diazoefficiens (strain JCM 10833 / BCRC 13528 / IAM 13628 / NBRC 14792 / USDA 110).